A 358-amino-acid polypeptide reads, in one-letter code: Insulin gene enhancer protein isl-2b (358 aa).

LIM zinc-binding domains lie at 27 to 80 (CVGC…CKRD) and 89 to 143 (CAKC…RADH). A DNA-binding region (homeobox) is located at residues 191-250 (TTRVRTVLNEKQLHTLRTCYNANPRPDALMKEQLVEMTGLSPRVIRVWFQNKRCKDKKRS). Over residues 325 to 335 (ESGSLGNSSGS) the composition is skewed to low complexity. A disordered region spans residues 325-358 (ESGSLGNSSGSDVTSLSSQLPDTPNSMVPSPVET). Residues 336 to 358 (DVTSLSSQLPDTPNSMVPSPVET) show a composition bias toward polar residues.

The protein localises to the nucleus. Its function is as follows. Binds to one of the cis-acting domain of the insulin gene enhancer. May be involved in the regional specification of the myotome and also in target recognition by the caudal primary neuron. The chain is Insulin gene enhancer protein isl-2b (isl2b) from Danio rerio (Zebrafish).